The sequence spans 418 residues: Thyroid hormone receptor alpha-A (418 aa).

The segment at 1–38 (MDQNLSGLDCLSEPDEKRWPDGKRKRKNSQCMGKSGMS) is disordered. The interval 1 to 60 (MDQNLSGLDCLSEPDEKRWPDGKRKRKNSQCMGKSGMSGDSLVSLPSAGYIPSYLDKDEP) is modulating. 2 consecutive NR C4-type zinc fingers follow at residues 61–81 (CVVCSDKATGYHYRCITCEGC) and 99–123 (CKYDGCCIIDKITRNQCQLCRFKKC). The nuclear receptor DNA-binding region spans 61-135 (CVVCSDKATG…VGMAMDLVLD (75 aa)). The 245-residue stretch at 171 to 415 (EEWELIRIVT…PPLFLEVFED (245 aa)) folds into the NR LBD domain.

Belongs to the nuclear hormone receptor family. NR1 subfamily. Binds to thyroid hormone receptor element (TRE) weakly as homodimers and monomers, but binds TRE with much higher affinity as heterodimers with retinoid X receptors. Can bind DNA as a heterodimer with either rxra or rxrg.

The protein localises to the nucleus. Functionally, high affinity receptor for triiodothyronine (T3). The chain is Thyroid hormone receptor alpha-A (thra-a) from Xenopus laevis (African clawed frog).